A 224-amino-acid chain; its full sequence is uncharacterized protein (224 aa).

Transmembrane regions (helical) follow at residues 32–52, 60–80, 100–120, 130–150, and 162–182; these read ILTL…PLVV, LFTN…IYFF, IIYL…SGLG, AIAY…LFGF, and LGFS…FGII.

Belongs to the derlin family.

It localises to the endoplasmic reticulum membrane. This is an uncharacterized protein from Schizosaccharomyces pombe (strain 972 / ATCC 24843) (Fission yeast).